The sequence spans 424 residues: UDP-N-acetylglucosamine 1-carboxyvinyltransferase (424 aa).

Position 22-23 (22-23 (KN)) interacts with phosphoenolpyruvate. A UDP-N-acetyl-alpha-D-glucosamine-binding site is contributed by R98. C122 functions as the Proton donor in the catalytic mechanism. Residue C122 is modified to 2-(S-cysteinyl)pyruvic acid O-phosphothioketal. UDP-N-acetyl-alpha-D-glucosamine contacts are provided by residues 127-131 (RPVDQ), D312, and I334.

This sequence belongs to the EPSP synthase family. MurA subfamily.

Its subcellular location is the cytoplasm. The enzyme catalyses phosphoenolpyruvate + UDP-N-acetyl-alpha-D-glucosamine = UDP-N-acetyl-3-O-(1-carboxyvinyl)-alpha-D-glucosamine + phosphate. The protein operates within cell wall biogenesis; peptidoglycan biosynthesis. Cell wall formation. Adds enolpyruvyl to UDP-N-acetylglucosamine. In Xanthomonas campestris pv. campestris (strain 8004), this protein is UDP-N-acetylglucosamine 1-carboxyvinyltransferase.